A 334-amino-acid polypeptide reads, in one-letter code: Protein RecA (334 aa).

65–72 (GNESSGKT) serves as a coordination point for ATP.

It belongs to the RecA family.

The protein localises to the cytoplasm. Can catalyze the hydrolysis of ATP in the presence of single-stranded DNA, the ATP-dependent uptake of single-stranded DNA by duplex DNA, and the ATP-dependent hybridization of homologous single-stranded DNAs. It interacts with LexA causing its activation and leading to its autocatalytic cleavage. This is Protein RecA from Ureaplasma parvum serovar 3 (strain ATCC 27815 / 27 / NCTC 11736).